Here is a 430-residue protein sequence, read N- to C-terminus: 3-phosphoshikimate 1-carboxyvinyltransferase (430 aa).

Residues Lys-23, Ser-24, and Arg-28 each coordinate 3-phosphoshikimate. Lys-23 contacts phosphoenolpyruvate. Phosphoenolpyruvate-binding residues include Gly-95 and Arg-123. 4 residues coordinate 3-phosphoshikimate: Ser-169, Gln-171, Asp-315, and Lys-342. Phosphoenolpyruvate is bound at residue Gln-171. The active-site Proton acceptor is the Asp-315. Positions 346 and 388 each coordinate phosphoenolpyruvate.

This sequence belongs to the EPSP synthase family. Monomer.

The protein localises to the cytoplasm. The enzyme catalyses 3-phosphoshikimate + phosphoenolpyruvate = 5-O-(1-carboxyvinyl)-3-phosphoshikimate + phosphate. It functions in the pathway metabolic intermediate biosynthesis; chorismate biosynthesis; chorismate from D-erythrose 4-phosphate and phosphoenolpyruvate: step 6/7. In terms of biological role, catalyzes the transfer of the enolpyruvyl moiety of phosphoenolpyruvate (PEP) to the 5-hydroxyl of shikimate-3-phosphate (S3P) to produce enolpyruvyl shikimate-3-phosphate and inorganic phosphate. The sequence is that of 3-phosphoshikimate 1-carboxyvinyltransferase from Streptococcus pyogenes serotype M1.